The sequence spans 391 residues: Multidrug resistance protein MdtL (391 aa).

A run of 12 helical transmembrane segments spans residues 4–24 (FLIC…MYLV), 42–62 (IAFS…GKVA), 69–89 (PVAI…SLAE), 93–113 (LFLA…VVAF), 131–151 (LLNG…HLIM), 158–178 (SLFW…LFIL), 203–222 (FFLS…LTFV), 245–265 (ALTA…LGIF), 269–289 (TLMI…AVSP), 293–313 (VSLF…GVAM), 331–351 (LGIA…VVGI), and 356–376 (MLIG…MFVA).

It belongs to the major facilitator superfamily. DHA1 family. MdtL (TC 2.A.1.2.22) subfamily.

The protein resides in the cell inner membrane. Its function is as follows. Confers resistance to chloramphenicol. This chain is Multidrug resistance protein MdtL, found in Escherichia coli O9:H4 (strain HS).